Reading from the N-terminus, the 576-residue chain is Rop guanine nucleotide exchange factor 13 (576 aa).

Positions 119-485 (KSCYFAYVTE…QLTQNPELAM (367 aa)) constitute a PRONE domain. Residues 557 to 570 (KTTYLESLGTTRSP) are compositionally biased toward polar residues. Positions 557-576 (KTTYLESLGTTRSPTAGRYS) are disordered.

As to quaternary structure, interacts with PRK6. As to expression, specifically expressed in mature flowers.

Guanine-nucleotide exchange factor (GEF) that acts as an activator of Rop (Rho of plants) GTPases by promoting the exchange of GDP for GTP. The sequence is that of Rop guanine nucleotide exchange factor 13 from Arabidopsis thaliana (Mouse-ear cress).